The primary structure comprises 348 residues: MTAPSQVLKIRRPDDWHLHLRDGDMLKTVVPYTSEIYGRAIVMPNLAPPVTTVEAAVAYRQRILDTVPAGHDFTPLMTCYLTDSLDPNELERGFNEGVFTAAKLYPANATTNSSHGVTSVDAIMPVLERMEKIGMPLLVHGEVTHADIDIFDREARFIESVMEPLRQRLTALKVVFEHITTKDAADYVRDGNERLAATITPQHLMFNRNHMLVGGVRPHLYCLPILKRNIHQQALRELVASGFNRVFLGTDSAPHARHRKESSCGCAGCFNAPTALGSYATVFEEMNALQHFEAFCSVNGPQFYGLPVNDTFIELVREEQQVAESIALTDDTLVPFLAGETVRWSVKQ.

Residues His-17 and His-19 each contribute to the Zn(2+) site. Substrate-binding positions include 19–21 (HLR) and Asn-45. 3 residues coordinate Zn(2+): Lys-103, His-140, and His-178. At Lys-103 the chain carries N6-carboxylysine. His-140 lines the substrate pocket. Substrate is bound at residue Leu-223. Asp-251 contacts Zn(2+). Asp-251 is an active-site residue. Residues His-255 and Ala-267 each coordinate substrate.

The protein belongs to the metallo-dependent hydrolases superfamily. DHOase family. Class II DHOase subfamily. In terms of assembly, homodimer. Zn(2+) serves as cofactor.

The catalysed reaction is (S)-dihydroorotate + H2O = N-carbamoyl-L-aspartate + H(+). It participates in pyrimidine metabolism; UMP biosynthesis via de novo pathway; (S)-dihydroorotate from bicarbonate: step 3/3. Catalyzes the reversible cyclization of carbamoyl aspartate to dihydroorotate. This is Dihydroorotase from Escherichia coli O7:K1 (strain IAI39 / ExPEC).